The following is a 338-amino-acid chain: Aspartate carbamoyltransferase catalytic subunit (338 aa).

The carbamoyl phosphate site is built by Arg-59 and Thr-60. Lys-87 contributes to the L-aspartate binding site. Residues Arg-109, His-142, and Gln-145 each contribute to the carbamoyl phosphate site. The L-aspartate site is built by Arg-182 and Arg-253. Carbamoyl phosphate is bound by residues Gly-294 and Pro-295.

It belongs to the aspartate/ornithine carbamoyltransferase superfamily. ATCase family. As to quaternary structure, heterododecamer (2C3:3R2) of six catalytic PyrB chains organized as two trimers (C3), and six regulatory PyrI chains organized as three dimers (R2).

It catalyses the reaction carbamoyl phosphate + L-aspartate = N-carbamoyl-L-aspartate + phosphate + H(+). Its pathway is pyrimidine metabolism; UMP biosynthesis via de novo pathway; (S)-dihydroorotate from bicarbonate: step 2/3. Catalyzes the condensation of carbamoyl phosphate and aspartate to form carbamoyl aspartate and inorganic phosphate, the committed step in the de novo pyrimidine nucleotide biosynthesis pathway. In Prochlorococcus marinus (strain AS9601), this protein is Aspartate carbamoyltransferase catalytic subunit.